A 97-amino-acid chain; its full sequence is Protein C4 (97 aa).

Disordered stretches follow at residues 1 to 31 and 75 to 97; these read MGLL…PHTG and ANLP…PSIY. A lipid anchor (N-myristoyl glycine; by host) is attached at Gly2. Over residues 77–88 the composition is skewed to polar residues; that stretch reads LPTTHMPRQSIQ.

This sequence belongs to the geminiviridae protein AC4/C4 family.

The protein localises to the host cell membrane. Functionally, pathogenicity determinant. May act as a suppressor of RNA-mediated gene silencing, also known as post-transcriptional gene silencing (PTGS), a mechanism of plant viral defense that limits the accumulation of viral RNAs. This chain is Protein C4, found in Tomato yellow leaf curl China virus (TYLCCNV).